A 624-amino-acid chain; its full sequence is MAIVSSVPLASKSCLHKSLISSIHKLKPFCRTIPTLGMSRPGKYVMPSMSMSSPVSDDGVQRRTGGYHSNLWNDDIIQFLSTPYGEPAYRERGERLIDEVKNMFNSISMEDVEFSPLNDLIQRLWIVDSVERLGIDRHFKNEIKSTLDYVYSYWTQKGIGCGIESVDPDLNSTALGLRTLRLHGYPVSAEVLKHFQNQNGQFACSPSETEGEMRSIVNLYRASLIAFPGEKVMEEAEIFSTKYLKEALQKIPVSSLSREIGDVLEQDWHTNLPRLEARNYIDVFGQDTKDTKLYMKTEKLLELAKLEFNIFQSLQKTELDSLLRWWKDSGFHHITFSRHLHVEYYTLASCIAIEPQHSRFRLGFAKACHVITILDDMYDVFGTIDELELFTAQIKRWDPSATDCLPKYMKRMYMILYDMVNEMSREAETAQGRDTLNYARQAWEDFIDSYMQEAKWIATGYLPTFDEYFENGKVSSGHRVAALQPILTMDIPFPHDILKEVDFPSKLNDLASAILRLRGDTRCYKADRARGEEASCISCYMKDNPGATEEDALSHINAVISDVIKGLNWELLNPNSSVPISSKKHVFDVSRALHYGYKYRDGYSVSNIETKSLVMRTLLESVPF.

The transit peptide at 1 to 48 (MAIVSSVPLASKSCLHKSLISSIHKLKPFCRTIPTLGMSRPGKYVMPS) directs the protein to the chloroplast. Residues Asp-375, Asp-379, and Asp-527 each coordinate Mg(2+). A DDXXD motif motif is present at residues 375-379 (DDMYD).

Belongs to the terpene synthase family. Tpsd subfamily. Mg(2+) serves as cofactor. Requires Mn(2+) as cofactor.

The protein localises to the plastid. Its subcellular location is the chloroplast. The catalysed reaction is (2E)-geranyl diphosphate = (-)-beta-phellandrene + diphosphate. The protein operates within terpene metabolism; oleoresin biosynthesis. Functionally, terpene synthase (TPS) involved in the biosynthesis of monoterpene natural products included in conifer oleoresin secretions and volatile emissions; these compounds contribute to biotic and abiotic stress defense against herbivores and pathogens. Catalyzes the conversion of (2E)-geranyl diphosphate (GPP) to (-)-beta-phellandrene. This Picea sitchensis (Sitka spruce) protein is (-)-beta-phellandrene synthase 3, chloroplastic.